We begin with the raw amino-acid sequence, 720 residues long: MTEKVKQHAAPVTGSDEIDIGRLVGTVIEARWWVIGITAVFALCAVVYTFFATPIYSADALVQIEQSSGNSLVQDIGSALANKPPASDAEIQLIRSRLVLGKTVDDLDLDIAVSKNTFPIFGAGWDRLMGRQNETVKVTTFNRPKEMEDQVFTLNVLDNKNYTLSSDGGFSARGQAGQILKKEGVTLMVEAIHARPGSEFTVTKYSTLGMINQLQNSLTVTENGKDAGVLSLTYTGEDREQIRDILNSIARNYQEQNIERKSAEASKSLAFLAQQLPEVRSRLDVAENKLNAFRQDKDSVDLPLEAKAVLDSMVNIDAQLNELTFKEAEISKLYTKVHPAYRTLLEKRQALEDEKAKLNGRVTAMPKTQQEIVRLTRDVESGQQVYMQLLNKEQELKITEASTVGDVRIVDPAITQPGVLKPKKGLIILGAIILGLMLSIVGVLLRSLFNRGIESPQVLEEHGISVYASIPLSEWQKARDSVKTIKGIKRYKQSQLLAVGNPTDLAIEAIRSLRTSLHFAMMQAQNNVLMMTGVSPSIGKTFVCANLAAVISQTNKRVLLIDCDMRKGYTHELLGTNNVNGLSEILIGQGDITTAAKPTSIAKFDLIPRGQVPPNPSELLMSERFAELVNWASKNYDLVLIDTPPILAVTDAAIVGRHVGTTLMVARYAVNTLKEVETSLSRFEQNGIPVKGVILNSIFRRASAYQDYGYYEYEYKSDAK.

Residues 1 to 31 (MTEKVKQHAAPVTGSDEIDIGRLVGTVIEAR) are Cytoplasmic-facing. The chain crosses the membrane as a helical span at residues 32 to 52 (WWVIGITAVFALCAVVYTFFA). Residues 53–424 (TPIYSADALV…TQPGVLKPKK (372 aa)) lie on the Periplasmic side of the membrane. A helical membrane pass occupies residues 425-445 (GLIILGAIILGLMLSIVGVLL). Residues 446 to 720 (RSLFNRGIES…YEYEYKSDAK (275 aa)) are Cytoplasmic-facing. At Tyr-569 the chain carries Phosphotyrosine; by autocatalysis. Phosphotyrosine is present on residues Tyr-708, Tyr-710, Tyr-711, Tyr-713, and Tyr-715.

This sequence belongs to the etk/wzc family. In terms of processing, autophosphorylated. Seems to be phosphorylated through a cooperative two-step mechanism. First, Tyr-569 is phosphorylated in an intramolecular reaction that generates a significant increase of protein kinase activity. Then Tyr-708, Tyr-710, Tyr-711, Tyr-713 and Tyr-715 are phosphorylated in an intermolecular Tyr-569-dependent reaction.

The protein localises to the cell inner membrane. The catalysed reaction is L-tyrosyl-[protein] + ATP = O-phospho-L-tyrosyl-[protein] + ADP + H(+). The protein operates within glycan metabolism; exopolysaccharide biosynthesis. Its activity is regulated as follows. Dephosphorylated and activated by wzb. In terms of biological role, required for the extracellular polysaccharide colanic acid synthesis. The autophosphorylated form is inactive. Probably involved in the export of colanic acid from the cell to medium. Phosphorylates udg. In Escherichia coli O157:H7, this protein is Tyrosine-protein kinase wzc (wzc).